A 351-amino-acid polypeptide reads, in one-letter code: Uroporphyrinogen decarboxylase (351 aa).

Substrate contacts are provided by residues 25 to 29, Asp74, Tyr151, Ser206, and His325; that span reads RQAGR.

Belongs to the uroporphyrinogen decarboxylase family. Homodimer.

The protein resides in the cytoplasm. It carries out the reaction uroporphyrinogen III + 4 H(+) = coproporphyrinogen III + 4 CO2. It functions in the pathway porphyrin-containing compound metabolism; protoporphyrin-IX biosynthesis; coproporphyrinogen-III from 5-aminolevulinate: step 4/4. Its function is as follows. Catalyzes the decarboxylation of four acetate groups of uroporphyrinogen-III to yield coproporphyrinogen-III. This is Uroporphyrinogen decarboxylase from Chlorobaculum parvum (strain DSM 263 / NCIMB 8327) (Chlorobium vibrioforme subsp. thiosulfatophilum).